The sequence spans 675 residues: Methionine--tRNA ligase (675 aa).

The 'HIGH' region signature appears at 15–25; that stretch reads PYANGSIHLGH. Residues Cys-146, Cys-149, Cys-159, and Cys-162 each coordinate Zn(2+). The 'KMSKS' region signature appears at 332–336; that stretch reads KMSKS. Lys-335 serves as a coordination point for ATP. The 103-residue stretch at 573–675 folds into the tRNA-binding domain; sequence DFAKVDMRIA…SGAQPGMQVK (103 aa).

The protein belongs to the class-I aminoacyl-tRNA synthetase family. MetG type 1 subfamily. Homodimer. It depends on Zn(2+) as a cofactor.

It localises to the cytoplasm. It catalyses the reaction tRNA(Met) + L-methionine + ATP = L-methionyl-tRNA(Met) + AMP + diphosphate. In terms of biological role, is required not only for elongation of protein synthesis but also for the initiation of all mRNA translation through initiator tRNA(fMet) aminoacylation. This is Methionine--tRNA ligase from Yersinia pseudotuberculosis serotype O:3 (strain YPIII).